Consider the following 427-residue polypeptide: MTEAMKITLSTQPADARWGDKATYSINNDGITLHLNGKDDSGLIQRAARKIDGLGIKHVQLTGAGWDVERSWAFWQGYKGPKGSRKVEWPDLDDEKRKELDNRLTIIDWVRDTINAPAEELGPEQLAQRAVDLLCSVACDHVSYRITKGEDLREQNYMGLHTVGRGSDRAPVLLALDYNPTGDKDAPVYACLVGKGITFDSGGYSIKQSAFMDSMKSDMGGAATVTGALAFAITRGLNKRVKLYLCCADNLISGNAFKLGDIIHYRNGKNVEVMNTDAEGRLVLADGLIDASAQKPELIIDAATLTGAAKTALGNDYHALFSFDDALAGRLLASAAEENEPFWRLPLAEFHRNQLPSNFAELNNTGSAAYPAGASTAAGFLSHFVENYQQGWLHIDCSATYRKAPVEQWSAGATGLGVRTIANLLTA.

K195 and D200 together coordinate Mn(2+). The active site involves K207. D218, D277, and E279 together coordinate Mn(2+). Residue R281 is part of the active site.

Belongs to the peptidase M17 family. Homohexamer. Mn(2+) is required as a cofactor.

It is found in the cytoplasm. It catalyses the reaction Release of an N-terminal amino acid, Xaa, from a peptide or arylamide. Xaa is preferably Glu or Asp but may be other amino acids, including Leu, Met, His, Cys and Gln.. Its function is as follows. Probably plays an important role in intracellular peptide degradation. This chain is Peptidase B, found in Citrobacter koseri (strain ATCC BAA-895 / CDC 4225-83 / SGSC4696).